The chain runs to 196 residues: dTTP/UTP pyrophosphatase (196 aa).

Aspartate 75 serves as the catalytic Proton acceptor.

Belongs to the Maf family. YhdE subfamily. The cofactor is a divalent metal cation.

Its subcellular location is the cytoplasm. It catalyses the reaction dTTP + H2O = dTMP + diphosphate + H(+). The enzyme catalyses UTP + H2O = UMP + diphosphate + H(+). Nucleoside triphosphate pyrophosphatase that hydrolyzes dTTP and UTP. May have a dual role in cell division arrest and in preventing the incorporation of modified nucleotides into cellular nucleic acids. The sequence is that of dTTP/UTP pyrophosphatase from Wolbachia pipientis subsp. Culex pipiens (strain wPip).